The chain runs to 213 residues: Urease accessory protein UreE (213 aa).

The segment at 170-213 (EHHGRSHSHSHSHSHDHDHDHDHDHDHDHQHGPSCSHGHGHGHR) is disordered. The span at 182–200 (HSHDHDHDHDHDHDHDHQH) shows a compositional bias: basic and acidic residues.

This sequence belongs to the UreE family.

The protein resides in the cytoplasm. Functionally, involved in urease metallocenter assembly. Binds nickel. Probably functions as a nickel donor during metallocenter assembly. This chain is Urease accessory protein UreE, found in Burkholderia thailandensis (strain ATCC 700388 / DSM 13276 / CCUG 48851 / CIP 106301 / E264).